The chain runs to 85 residues: N.vectensis toxin 1 5 (85 aa).

The N-terminal stretch at 1–20 is a signal peptide; sequence MASFKIVIVCLALLVAVACA. A propeptide spanning residues 21 to 36 is cleaved from the precursor; the sequence is RRRDMMSDDELDFHLS. 3 disulfides stabilise this stretch: cysteine 42/cysteine 82, cysteine 44/cysteine 72, and cysteine 65/cysteine 83.

The protein belongs to the sea anemone sodium channel inhibitory toxin family. Type II subfamily. In terms of tissue distribution, expressed in ectodermal glands and in clumps outside of the extodermal layer. Is not expressed in nematocytes. In adult female tissues, shows similar expression levels in mesenteries (gametes-producing tissue), tentacles, pharynx and physa.

The protein localises to the secreted. Functionally, binds to site 3 of voltage-gated sodium channels and inhibits the inactivation process. Is highly active on DmNav1/TipE (drosophila) and is only extremely weakly active on rat Nav1.4-beta-1/SCN4A-SCN1B, and on human Nav1.5-beta-1/SCN5A-beta-1. This reveals high specificity for arthropod over mammalian channels. In vivo, when released into the medium, this recombinant toxin induces impaired swimming, paralysis and death of the crustacean A.nauplii within several hours. Also causes paralysis of cherry shrimps immediately after injection at very low doses. Its effect on zebrafish (D.rerio) larvae is also rapid, since it induces tail twitching accompanied by impaired swimming after 20 minutes and complete paralysis within 45 minutes. It has also been observed to cause death of zebrafish larvae within 1 hour. In Nematostella vectensis (Starlet sea anemone), this protein is N.vectensis toxin 1 5.